The sequence spans 905 residues: Protein translocase subunit SecA (905 aa).

ATP-binding positions include Gln87, 105–109 (GEGKT), and Asp509. Residues Cys890, Cys892, Cys901, and His902 each coordinate Zn(2+).

It belongs to the SecA family. As to quaternary structure, monomer and homodimer. Part of the essential Sec protein translocation apparatus which comprises SecA, SecYEG and auxiliary proteins SecDF-YajC and YidC. The cofactor is Zn(2+).

Its subcellular location is the cell inner membrane. It is found in the cytoplasm. It carries out the reaction ATP + H2O + cellular proteinSide 1 = ADP + phosphate + cellular proteinSide 2.. Its function is as follows. Part of the Sec protein translocase complex. Interacts with the SecYEG preprotein conducting channel. Has a central role in coupling the hydrolysis of ATP to the transfer of proteins into and across the cell membrane, serving both as a receptor for the preprotein-SecB complex and as an ATP-driven molecular motor driving the stepwise translocation of polypeptide chains across the membrane. This Acinetobacter baylyi (strain ATCC 33305 / BD413 / ADP1) protein is Protein translocase subunit SecA.